The following is a 1274-amino-acid chain: MGNTDSKSSSILLNHCIALVRPEDADASSPSRTSSPSPSLSVDADPLSLNLSIFKLDSGPDVEALFSDKPNVPLDTVFNDFYLDFISVDVQDFSINSSFKKILHIISSLNPPNFNNLIVFLSLYIILSANSLPASRTGLHSSRLINAIKTLSILIPIYFDRVKSSTQDHYDVFWATQHEIEGLPLQNIPLGERLLLAILKLAFQDNFTTAVTAHPSELWEIGILTNSNKYRSLLNMHHQWHLFANRLLLLRLLAALFSSDLYTSGGKQDINMFLVYWCTQMPKDKSIQFTSSLLNCTMRFILNNNKDFQSLKANFFSSDATASNWQTLYFQFVQSCLHVLNLSMSYKAQDNVITIFLTQLQREYDLKLILSSFIKIFKYPIDLAIEQESNIFNFTNNKHIDASRRRAVSTSSHDNSSSSHASLPSSSSAAYHTKPQTKPQLPEIHPLLIPMTILMTNLIDCNKCFQNYFADKFASRFIIFSIYYLKYYDYSSLSSSSSTTRSNSSTTSNGTSNDTSNERSIVELNENSVSQILLPLLNHLLLILTSKKLVLFKMLQTFNLNYYTNNLPNFYKLSNINGDINNLTFRDFTVIQLSNLILDNIKFNLQPNPIFYELIYNLLPINDEILTSSHKNDDSHDDLILLSAKKKSASPSAATSSHTSSSKLSYNAAMSLLYVLSKSSNKVYLTTYATPVFKTKDIPYMISPGFKMDLLALLLRSITIFFTLYFDDAENLLFAMVRHQSITHQINDSINSISKALDMNPNLNSHIMTLKQMGFNRKVQWKDFYQFEEITDLPQVNLYSSANQQHQNQQQGQNDNRGQNQNEDPGQENESPTPYLLFNPASLENETPGTVKHFSSTNHDKNYQVIAFIDFKSDSNLNLQHQLEYWPHRPQWPTPLTFTHKCKNPKYENFNEVWSGTVYLQILLRVIKQILSKVPEIPRIKSVQYFETLSKLSALRSDILTTIHPRLPLDVRRLTTFQPLSMHTNDKLLMWFHIATWANIFTQTSFKYEETFSHELRQFESLLDISIDECEGNTISKPTTDRLGYIRRSRGQSSVSLERTISAGSGVSTPTMALNRTKSNGSGNLMNYFFQNTAQNHFQHLRSSSSSSSITLEKTTSNSSSIRTRPNSHHVAPETNNNNSTNGNSNNSSNGGFSFFKWKWGGNNSNGGSDDTKASQRDPNVSTSIITDNLNSYMFEEEISPGVVNNIIENNIWVGTDIRLFKIANFRKESFSFLEMTSSFFKKFKFINSDNDNYNNNEFDDNTQLRYTSRGLYR.

3 disordered regions span residues 23–42 (EDAD…SLSV), 405–439 (RRAV…QTKP), and 494–517 (SSSS…DTSN). 3 stretches are compositionally biased toward low complexity: residues 27 to 42 (ASSP…SLSV), 409 to 432 (STSS…AAYH), and 494 to 515 (SSSS…SNDT). S635 carries the phosphoserine modification. Positions 803–822 (NQQHQNQQQGQNDNRGQNQN) are enriched in low complexity. The segment at 803 to 842 (NQQHQNQQQGQNDNRGQNQNEDPGQENESPTPYLLFNPAS) is disordered. S1065 bears the Phosphoserine mark. The disordered stretch occupies residues 1100-1149 (HLRSSSSSSSITLEKTTSNSSSIRTRPNSHHVAPETNNNNSTNGNSNNSS). Polar residues predominate over residues 1110–1125 (ITLEKTTSNSSSIRTR). The segment covering 1135–1149 (TNNNNSTNGNSNNSS) has biased composition (low complexity).

It localises to the cytoplasm. Its function is as follows. Seems to be involved in cell wall organization and biogenesis. This is Protein ECM30 (ECM30) from Saccharomyces cerevisiae (strain ATCC 204508 / S288c) (Baker's yeast).